Reading from the N-terminus, the 189-residue chain is MRKIGIIGGTFDPPHYGHLLIANEVYHALNLEEVWFLPNQIPPHKHGRNITSVESRLQMLELATEEEEHFSICLEELSRKGPSYTYDTMLQLTKKHPDVQFHFIIGGDMVEYLPKWYNIEALLDLVTFVGVARPGYTLHTPYPITTVEIPEFAVSSSLLRERYKEKKTCKYLLPEKVQVYIERNGLYES.

It belongs to the NadD family.

It carries out the reaction nicotinate beta-D-ribonucleotide + ATP + H(+) = deamido-NAD(+) + diphosphate. The protein operates within cofactor biosynthesis; NAD(+) biosynthesis; deamido-NAD(+) from nicotinate D-ribonucleotide: step 1/1. Catalyzes the reversible adenylation of nicotinate mononucleotide (NaMN) to nicotinic acid adenine dinucleotide (NaAD). The chain is Probable nicotinate-nucleotide adenylyltransferase from Bacillus cereus (strain AH187).